A 411-amino-acid chain; its full sequence is Arginine deiminase 1 (411 aa).

Cysteine 401 serves as the catalytic Amidino-cysteine intermediate.

It belongs to the arginine deiminase family.

It localises to the cytoplasm. It carries out the reaction L-arginine + H2O = L-citrulline + NH4(+). It functions in the pathway amino-acid degradation; L-arginine degradation via ADI pathway; carbamoyl phosphate from L-arginine: step 1/2. This chain is Arginine deiminase 1 (arcA1), found in Staphylococcus epidermidis (strain ATCC 12228 / FDA PCI 1200).